A 431-amino-acid polypeptide reads, in one-letter code: Glutamate-1-semialdehyde 2,1-aminomutase (431 aa).

K265 bears the N6-(pyridoxal phosphate)lysine mark.

This sequence belongs to the class-III pyridoxal-phosphate-dependent aminotransferase family. HemL subfamily. In terms of assembly, homodimer. Requires pyridoxal 5'-phosphate as cofactor.

Its subcellular location is the cytoplasm. The catalysed reaction is (S)-4-amino-5-oxopentanoate = 5-aminolevulinate. It functions in the pathway porphyrin-containing compound metabolism; protoporphyrin-IX biosynthesis; 5-aminolevulinate from L-glutamyl-tRNA(Glu): step 2/2. This Vibrio parahaemolyticus serotype O3:K6 (strain RIMD 2210633) protein is Glutamate-1-semialdehyde 2,1-aminomutase.